The primary structure comprises 350 residues: Calcium uniporter protein, mitochondrial (350 aa).

A mitochondrion-targeting transit peptide spans 1–49 (MAAAAGRSLLLLLCSRGGGGGAGGCGALTAGCFPGLGVSRHRPHQQHRT). Over 50–232 (AHQRPASWQS…ISRKAEKRTT (183 aa)) the chain is Mitochondrial matrix. Phosphoserine; by CaMK2 occurs at positions 56 and 91. The interval 74 to 164 (VTVVYQNGLP…LTYHVRPPKR (91 aa)) is N-terminal MCU domain. An S-glutathionyl cysteine modification is found at cysteine 96. Positions 191 to 220 (IEQHQLNKERELVERLEDLKQQLAPLEKVR) form a coiled coil. A helical transmembrane segment spans residues 233-256 (LVLWGGLAYMATQFGILARLTWWE). Residues 257–264 (YSWDIMEP) lie on the Mitochondrial intermembrane side of the membrane. Residues 259-267 (WDIMEPVTY) carry the Selectivity filter motif. Glutamate 263 contributes to the Ca(2+) binding site. A helical transmembrane segment spans residues 265–282 (VTYFITYGSAMAMYAYFV). The Mitochondrial matrix segment spans residues 283 to 350 (MTRQEYVYPE…LPLRQIGEKE (68 aa)). The interval 284–289 (TRQEYV) is juxtamembrane helix. Residues 310–338 (RFDLEKYNQLKDAIAQAEMDLKRLRDPLQ) are a coiled coil. Position 331 is an N6-acetyllysine (lysine 331).

Belongs to the MCU (TC 1.A.77) family. Homotetramer. Component of the uniplex complex, composed of MCU, EMRE/SMDT1, MICU1 and MICU2 (or MICU3) in a 4:4:1:1 stoichiometry. Interacts with CCDC109B/MCUB; this inhibits channel activity. Interacts with MCUR1. Interactions with MICU1 and MCUR1 are mutually exclusive. Interacts with SLC25A23. Post-translationally, phosphorylation by CaMK2 in heart leads to increased MCU current. The regulation of MCU by CaMK2 is however subject to discussion: another group was unable to reproduce these results. Phosphorylated on tyrosines by PTK2B/PYK2, promoting oligomerization. Glutathionylation at Cys-96 in response to reactive oxygen species (ROS) promotes MCU higher-order assembly, leading to constitutive activation of the MCU channel and mitochondrial calcium overload. In terms of processing, undergoes proteolytic degradation by SPG7. In terms of tissue distribution, detected in heart muscle (at protein level). Expressed in skeletal muscle, heart, kidney, liver, brain, lung, white fat and spleen.

It is found in the mitochondrion inner membrane. It carries out the reaction Ca(2+)(in) = Ca(2+)(out). MCU channel activity is regulated by the heterodimer composed of MICU1 and either MICU2 or MICU3, which act as calcium-sensors. At low calcium levels, MICU1 occludes the pore of the MCU channel, preventing mitochondrial calcium uptake. At higher calcium levels, calcium-binding to MICU1 and MICU2 (or MICU3) induces a conformational change that weakens MCU-MICU1 interactions and moves the MICU1-MICU2 heterodimer away from the pore, allowing calcium permeation through the channel. MCU channel activity is gated by EMRE/SMDT1 via the juxtamembrane helix loop. Inhibited by ruthenium red or its derivative Ru360. In terms of biological role, channel-forming and calcium-conducting subunit of the mitochondrial inner membrane calcium uniporter complex (uniplex), which mediates calcium uptake into the mitochondrial matrix. MCU channel activity is regulated by the calcium-sensor subunits of the uniplex MICU1 and MICU2 (or MICU3). Mitochondrial calcium homeostasis plays key roles in cellular physiology and regulates ATP production, cytoplasmic calcium signals and activation of cell death pathways. Involved in buffering the amplitude of systolic calcium rises in cardiomyocytes. While dispensable for baseline homeostatic cardiac function, acts as a key regulator of short-term mitochondrial calcium loading underlying a 'fight-or-flight' response during acute stress: acts by mediating a rapid increase of mitochondrial calcium in pacemaker cells. Participates in mitochondrial permeability transition during ischemia-reperfusion injury. Mitochondrial calcium uptake in skeletal muscle cells is involved in muscle size in adults. Regulates synaptic vesicle endocytosis kinetics in central nerve terminal. Regulates glucose-dependent insulin secretion in pancreatic beta-cells by regulating mitochondrial calcium uptake. Involved in antigen processing and presentation. This chain is Calcium uniporter protein, mitochondrial, found in Mus musculus (Mouse).